Consider the following 425-residue polypeptide: Kynurenine/alpha-aminoadipate aminotransferase, mitochondrial (425 aa).

Residues 1-29 (MNYSRFLTATSLARKPSPIRTTADILSKA) constitute a mitochondrion transit peptide. Residue arginine 20 coordinates substrate. Serine 40 carries the post-translational modification Phosphoserine. Lysine 69 bears the N6-acetyllysine mark. Residue tyrosine 74 coordinates substrate. The residue at position 172 (lysine 172) is an N6-succinyllysine. Lysine 179 carries the N6-acetyllysine modification. Asparagine 202 contacts substrate. Position 263 is an N6-(pyridoxal phosphate)lysine; alternate (lysine 263). Lysine 263 and lysine 339 each carry N6-acetyllysine; alternate. N6-succinyllysine; alternate is present on residues lysine 263 and lysine 339. Position 351 is an N6-acetyllysine (lysine 351). Lysine 367 bears the N6-acetyllysine; alternate mark. An N6-succinyllysine; alternate modification is found at lysine 367. Residue arginine 399 coordinates substrate. Lysine 422 is modified (N6-acetyllysine).

Belongs to the class-I pyridoxal-phosphate-dependent aminotransferase family. In terms of assembly, homodimer. Pyridoxal 5'-phosphate is required as a cofactor. Expressed mainly in kidney and to a lesser amount in liver and brain.

It is found in the mitochondrion. It catalyses the reaction L-kynurenine + 2-oxoglutarate = kynurenate + L-glutamate + H2O. The catalysed reaction is L-2-aminoadipate + 2-oxoglutarate = 2-oxoadipate + L-glutamate. It carries out the reaction glycine + 2-oxoglutarate = glyoxylate + L-glutamate. The enzyme catalyses L-kynurenine + glyoxylate = kynurenate + glycine + H2O. It catalyses the reaction 3-hydroxy-L-kynurenine + glyoxylate = xanthurenate + glycine + H2O. The catalysed reaction is 2-oxohexanoate + L-kynurenine = L-2-aminohexanoate + kynurenate + H2O. It carries out the reaction 3-phenylpyruvate + L-kynurenine = kynurenate + L-phenylalanine + H2O. The enzyme catalyses 4-methylsulfanyl-2-oxobutanoate + L-kynurenine = kynurenate + L-methionine + H2O. It catalyses the reaction 2-oxo-3-sulfanylpropanoate + L-kynurenine = kynurenate + L-cysteine + H2O. The catalysed reaction is indole-3-pyruvate + L-kynurenine = kynurenate + L-tryptophan + H2O. It carries out the reaction 2-oxopentanoate + L-kynurenine = L-2-aminopentanoate + kynurenate + H2O. The enzyme catalyses 4-methyl-2-oxopentanoate + L-kynurenine = kynurenate + L-leucine + H2O. It catalyses the reaction glyoxylate + L-methionine = 4-methylsulfanyl-2-oxobutanoate + glycine. The catalysed reaction is L-2-aminoadipate + glyoxylate = 2-oxoadipate + glycine. It carries out the reaction L-tyrosine + glyoxylate = 3-(4-hydroxyphenyl)pyruvate + glycine. The enzyme catalyses glyoxylate + L-phenylalanine = 3-phenylpyruvate + glycine. It catalyses the reaction L-tryptophan + glyoxylate = indole-3-pyruvate + glycine. The catalysed reaction is L-leucine + glyoxylate = 4-methyl-2-oxopentanoate + glycine. It carries out the reaction 2-oxobutanoate + L-kynurenine = (2S)-2-aminobutanoate + kynurenate + H2O. The enzyme catalyses 2-oxoadipate + L-kynurenine = L-2-aminoadipate + kynurenate + H2O. Its pathway is amino-acid degradation; L-lysine degradation via saccharopine pathway; glutaryl-CoA from L-lysine: step 4/6. Its function is as follows. Transaminase with broad substrate specificity. Has transaminase activity towards aminoadipate, kynurenine, methionine and glutamate. Shows activity also towards tryptophan, aspartate and hydroxykynurenine. Accepts a variety of oxo-acids as amino-group acceptors, with a preference for 2-oxoglutarate, 2-oxocaproic acid, phenylpyruvate and alpha-oxo-gamma-methiol butyric acid. Can also use glyoxylate as amino-group acceptor (in vitro). The chain is Kynurenine/alpha-aminoadipate aminotransferase, mitochondrial from Mus musculus (Mouse).